The chain runs to 330 residues: Agamous-like MADS-box protein AGL75 (330 aa).

Residues 19–61 enclose the MADS-box domain; the sequence is TSLSNRLETIFKKASELCTLCDIEACVIYYGPDGELKTWPKEK.

As to quaternary structure, interacts with MEE14/CBP1.

The protein resides in the nucleus. In terms of biological role, probable transcription factor that may function in the maintenance of the proper function of the central cell in pollen tube attraction. The polypeptide is Agamous-like MADS-box protein AGL75 (Arabidopsis thaliana (Mouse-ear cress)).